Reading from the N-terminus, the 145-residue chain is Small ribosomal subunit protein eS19 (145 aa).

It belongs to the eukaryotic ribosomal protein eS19 family. In terms of assembly, part of the 30S ribosomal subunit.

Its function is as follows. May be involved in maturation of the 30S ribosomal subunit. This chain is Small ribosomal subunit protein eS19, found in Methanothermobacter thermautotrophicus (strain ATCC 29096 / DSM 1053 / JCM 10044 / NBRC 100330 / Delta H) (Methanobacterium thermoautotrophicum).